Here is a 745-residue protein sequence, read N- to C-terminus: Myeloperoxidase (745 aa).

An N-terminal signal peptide occupies residues 1–48 (MGVPFFSSLRCMVDLGPCWAGGLTAEMKLLLALAGLLAILATPQPSEG). N139 is a glycosylation site (N-linked (GlcNAc...) asparagine). C167 and C180 form a disulfide bridge. D260 is a binding site for heme b. H261 (proton acceptor) is an active-site residue. Residue D262 participates in Ca(2+) binding. 2 disulfides stabilise this stretch: C281-C291 and C285-C309. C316 carries the cysteine sulfenic acid (-SOH) modification. A glycan (N-linked (GlcNAc...) asparagine) is linked at N323. Positions 334, 336, 338, and 340 each coordinate Ca(2+). N-linked (GlcNAc...) asparagine glycosylation is found at N355 and N391. A disulfide bond links C387 and C398. Positions 408 and 409 each coordinate heme b. An N-linked (GlcNAc...) asparagine glycan is attached at N483. Position 502 (H502) interacts with heme b. 2 cysteine pairs are disulfide-bonded: C606–C663 and C704–C730. The N-linked (GlcNAc...) asparagine glycan is linked to N729.

It belongs to the peroxidase family. XPO subfamily. As to quaternary structure, homodimer; disulfide-linked. Each monomer consists of a light and a heavy chain. Found in a complex with CP and LTF; interacts directly with CP, which protects CP antioxidant properties by MPO. It depends on Ca(2+) as a cofactor. The cofactor is heme b.

The protein resides in the lysosome. It carries out the reaction chloride + H2O2 + H(+) = hypochlorous acid + H2O. Part of the host defense system of polymorphonuclear leukocytes. It is responsible for microbicidal activity against a wide range of organisms. In the stimulated PMN, MPO catalyzes the production of hypohalous acids, primarily hypochlorous acid in physiologic situations, and other toxic intermediates that greatly enhance PMN microbicidal activity. Mediates the proteolytic cleavage of alpha-1-microglobulin to form t-alpha-1-microglobulin, which potently inhibits oxidation of low-density lipoprotein particles and limits vascular damage. The protein is Myeloperoxidase of Homo sapiens (Human).